The sequence spans 511 residues: Probable DNA ligase (511 aa).

Residue glutamate 208 participates in ATP binding. The N6-AMP-lysine intermediate role is filled by lysine 210. ATP-binding residues include arginine 215, arginine 230, glutamate 259, phenylalanine 299, arginine 377, and lysine 383.

This sequence belongs to the ATP-dependent DNA ligase family. The cofactor is Mg(2+).

It carries out the reaction ATP + (deoxyribonucleotide)n-3'-hydroxyl + 5'-phospho-(deoxyribonucleotide)m = (deoxyribonucleotide)n+m + AMP + diphosphate.. Its function is as follows. DNA ligase that seals nicks in double-stranded DNA during DNA replication, DNA recombination and DNA repair. The polypeptide is Probable DNA ligase (Streptomyces griseus subsp. griseus (strain JCM 4626 / CBS 651.72 / NBRC 13350 / KCC S-0626 / ISP 5235)).